The following is a 74-amino-acid chain: uncharacterized protein (74 aa).

This is an uncharacterized protein from Treponema pallidum (strain Nichols).